The primary structure comprises 115 residues: Somatostatin-2 (115 aa).

The first 18 residues, 1 to 18, serve as a signal peptide directing secretion; it reads MKVCRIHCALALLGLALA. A propeptide spanning residues 19–87 is cleaved from the precursor; sequence ICSQGAASQP…KEDLRVELER (69 aa). Cys-104 and Cys-115 form a disulfide bridge.

Belongs to the somatostatin family.

It is found in the secreted. Its function is as follows. Somatostatin inhibits the release of somatotropin. The protein is Somatostatin-2 (sst2) of Oncorhynchus mykiss (Rainbow trout).